Here is a 434-residue protein sequence, read N- to C-terminus: Angio-associated migratory cell protein (434 aa).

Residues Met-1 to Glu-63 are disordered. Phosphoserine is present on Ser-20. A compositionally biased stretch (acidic residues) spans Asp-39–Glu-62. WD repeat units follow at residues Leu-89–Glu-129, Gly-132–Ser-171, Glu-173–Gln-212, Pro-214–Lys-254, Gly-258–Arg-299, Ser-315–Gln-354, Gln-356–Asp-395, and Gly-398–Asp-433.

Its subcellular location is the cell membrane. The protein localises to the cytoplasm. In terms of biological role, plays a role in angiogenesis and cell migration. In smooth muscle cell migration, may act through the RhoA pathway. In Pongo abelii (Sumatran orangutan), this protein is Angio-associated migratory cell protein (AAMP).